The primary structure comprises 241 residues: Small ribosomal subunit protein uS2 (241 aa).

The protein belongs to the universal ribosomal protein uS2 family.

The protein is Small ribosomal subunit protein uS2 of Klebsiella pneumoniae subsp. pneumoniae (strain ATCC 700721 / MGH 78578).